Here is a 137-residue protein sequence, read N- to C-terminus: Peptide methionine sulfoxide reductase MsrB (137 aa).

In terms of domain architecture, MsrB spans 7 to 129 (AEELKKKLSE…NSASLAFSDE (123 aa)). Positions 46, 49, 95, and 98 each coordinate Zn(2+). C118 acts as the Nucleophile in catalysis.

The protein belongs to the MsrB Met sulfoxide reductase family. Zn(2+) serves as cofactor.

It carries out the reaction L-methionyl-[protein] + [thioredoxin]-disulfide + H2O = L-methionyl-(R)-S-oxide-[protein] + [thioredoxin]-dithiol. In Salmonella arizonae (strain ATCC BAA-731 / CDC346-86 / RSK2980), this protein is Peptide methionine sulfoxide reductase MsrB.